We begin with the raw amino-acid sequence, 382 residues long: tRNA-specific 2-thiouridylase MnmA (382 aa).

Residues 34 to 41 (AMSGGVDS) and Leu-60 contribute to the ATP site. Cys-128 functions as the Nucleophile in the catalytic mechanism. Residues Cys-128 and Cys-224 are joined by a disulfide bond. Position 152 (Gly-152) interacts with ATP. The interval 174–176 (RDQ) is interaction with tRNA. Cys-224 serves as the catalytic Cysteine persulfide intermediate.

This sequence belongs to the MnmA/TRMU family.

The protein localises to the cytoplasm. It carries out the reaction S-sulfanyl-L-cysteinyl-[protein] + uridine(34) in tRNA + AH2 + ATP = 2-thiouridine(34) in tRNA + L-cysteinyl-[protein] + A + AMP + diphosphate + H(+). Its function is as follows. Catalyzes the 2-thiolation of uridine at the wobble position (U34) of tRNA, leading to the formation of s(2)U34. The protein is tRNA-specific 2-thiouridylase MnmA of Sphingopyxis alaskensis (strain DSM 13593 / LMG 18877 / RB2256) (Sphingomonas alaskensis).